The chain runs to 837 residues: Striatin-interacting protein 1 (837 aa).

The residue at position 1 (M1) is an N-acetylmethionine. Positions 1–67 are disordered; it reads MEPAAGTPGP…DSEGYSESPD (67 aa). A compositionally biased stretch (pro residues) spans 18–35; sequence PQPPPPPPPATAQPPPGA. Basic and acidic residues predominate over residues 47–60; it reads KAREFNRNQRKDSE. Phosphoserine is present on residues S59, S335, and S339. A disordered region spans residues 336 to 423; sequence PPASASDLIE…DRLTCPKGLP (88 aa). Residues 356–377 are compositionally biased toward basic and acidic residues; it reads KALIKQDNLDAFNERDPYKADD. A compositionally biased stretch (acidic residues) spans 378-391; it reads SREEEEENDDDNSL. The residue at position 788 (S788) is a Phosphoserine. The required for STRIPAK core complex formation stretch occupies residues 796–837; sequence DNCLQSVLGQRVDLPEDFQMNYDLWLEREVFSKPISWEELLQ.

Belongs to the STRIP family. In terms of assembly, part of the core of STRIPAK complexes composed of PP2A catalytic and scaffolding subunits, the striatins (PP2A regulatory subunits), the striatin-associated proteins MOB4, STRIP1 and STRIP2, PDCD10 and members of the STE20 kinases, such as STK24 and STK26. The STRIPAK complex can be extended by adapter proteins such as SLMAP:SIKE1, CTTNBP2 or CTTNBP2NL. Interacts with CDC42BPB. Interacts with CTTNBP2NL.

It localises to the cytoplasm. In terms of biological role, plays a role in the regulation of cell morphology and cytoskeletal organization. Required in the cortical actin filament dynamics and cell shape. Part of the striatin-interacting phosphatase and kinase (STRIPAK) complexes. STRIPAK complexes have critical roles in protein (de)phosphorylation and are regulators of multiple signaling pathways including Hippo, MAPK, nuclear receptor and cytoskeleton remodeling. Different types of STRIPAK complexes are involved in a variety of biological processes such as cell growth, differentiation, apoptosis, metabolism and immune regulation. The polypeptide is Striatin-interacting protein 1 (STRIP1) (Bos taurus (Bovine)).